The primary structure comprises 306 residues: tRNA pseudouridine synthase B (306 aa).

Asp43 (nucleophile) is an active-site residue.

Belongs to the pseudouridine synthase TruB family. Type 1 subfamily.

It carries out the reaction uridine(55) in tRNA = pseudouridine(55) in tRNA. Functionally, responsible for synthesis of pseudouridine from uracil-55 in the psi GC loop of transfer RNAs. This Lacticaseibacillus casei (strain BL23) (Lactobacillus casei) protein is tRNA pseudouridine synthase B.